The following is a 230-amino-acid chain: MIEAILFDVDGTLAETEELHRRAFNETFAALGVDWFWDREEYRELLTTTGGKERIARFLRHQKGDPAPLPIADIHRAKTERFVALMAEGEIALRPGIADLIAEAKRAGIRLAVATTTSLPNVEALCRACFGHPAREIFDVIAAGDMVAEKKPSPDIYRLALRELDVPPERAVALEDSLNGLRAAKGAGLRCIVSPGFYTRHEEFAGADRLLDSFAELGGLAGLDLTAPVA.

D8 functions as the Nucleophile in the catalytic mechanism. Residues D8 and D10 each coordinate Mg(2+). D8 is a binding site for substrate. D10 functions as the Proton donor in the catalytic mechanism. Substrate contacts are provided by residues E17, 50 to 54 (GGKER), 75 to 78 (HRAK), and 115 to 121 (TTTSLPN). D176 serves as a coordination point for Mg(2+).

It belongs to the HAD-like hydrolase superfamily. CbbY/CbbZ/Gph/YieH family. It depends on Mg(2+) as a cofactor.

The enzyme catalyses D-xylulose 1,5-bisphosphate + H2O = D-xylulose 5-phosphate + phosphate. Highly selective xylulose-1,5-bisphosphate (XuBP) phosphatase. Also shows activity towards ribulose-1,5-bisphosphate (RuBP) and fructose-1,6-bisphosphate (FBP), but not towards fructose-6-phosphate (F6P) or ribulose-5-phosphate (Ru5P). Degrades xylulose-1,5-bisphosphate, a potent inhibitor of rubisco produced by the rubisco itself. The sequence is that of Protein CbbY from Cereibacter sphaeroides (Rhodobacter sphaeroides).